Here is a 360-residue protein sequence, read N- to C-terminus: Cuticle collagen dpy-2 (360 aa).

3 triple-helical region regions span residues 123-152 (GERGPSGDSGLPALPGAPGPDGAPGRPGTT), 174-230 (GPRG…KGRT), and 238-303 (GPPG…PGTC). Disordered regions lie at residues 127–158 (PSGDSGLPALPGAPGPDGAPGRPGTTPNASCI) and 174–360 (GPRG…IRKW). Over residues 189-198 (GEYGIGGRPG) the composition is skewed to gly residues. Residues 242 to 258 (DSGLPGPWGPPGSAGMP) show a composition bias toward low complexity. Pro residues predominate over residues 273 to 288 (PGPPGAPGPGGMPGPN).

The protein belongs to the cuticular collagen family. As to quaternary structure, collagen polypeptide chains are complexed within the cuticle by disulfide bonds and other types of covalent cross-links.

Functionally, nematode cuticles are composed largely of collagen-like proteins. The cuticle functions both as an exoskeleton and as a barrier to protect the worm from its environment. Mutations in dpy-2 affects the body shape. This is Cuticle collagen dpy-2 (dpy-2) from Caenorhabditis elegans.